The following is a 438-amino-acid chain: MVLLYTPKQKTNNVQTITADILDLDYQGLGVAKINGKTWFIENALPHEKVECRILEDKRQYGHATAKKWRVKSSERLEPKCAHFMRCGGCQGQHIPIEMQRKAKQSALFKRLSKLQSEPISFQPMICGDAWAYRRRVRLSLWFNPNTKQIDMGFRQKNTNDLIPVQSCEVAEPAINYLLPKLTALLEKFSTPKQLGHIELVAADNGVAMLLRYTKNLAEIDRTLLLKFAEQEKLMLFLQSDKGIEQIYGDAPYYQFSDGIKLHFDIRDFIQVNSALNERMINTALDWLELSQQDCVLDLFCGMGNFTLPLAKRVKSAVGIEGVFEMVQKAAQNAARNQIKNIEFFQADLDQSFVEQPWANQSFNKILLDPPRSGAAFALNALCELKAEKILYVSCNPATLVRDAEILCDFGYKIEKSAVIDMFPHTGHLESITLFTTK.

The TRAM domain occupies 8-68 (KQKTNNVQTI…RQYGHATAKK (61 aa)). [4Fe-4S] cluster-binding residues include C81, C87, C90, and C168. S-adenosyl-L-methionine is bound by residues Q271, F300, N305, E321, D348, and D369. The active-site Nucleophile is the C395.

The protein belongs to the class I-like SAM-binding methyltransferase superfamily. RNA M5U methyltransferase family. RlmD subfamily.

It catalyses the reaction uridine(1939) in 23S rRNA + S-adenosyl-L-methionine = 5-methyluridine(1939) in 23S rRNA + S-adenosyl-L-homocysteine + H(+). Functionally, catalyzes the formation of 5-methyl-uridine at position 1939 (m5U1939) in 23S rRNA. The polypeptide is 23S rRNA (uracil(1939)-C(5))-methyltransferase RlmD (Haemophilus influenzae (strain 86-028NP)).